The sequence spans 121 residues: Large ribosomal subunit protein uL14c (121 aa).

The protein belongs to the universal ribosomal protein uL14 family. In terms of assembly, part of the 50S ribosomal subunit.

The protein localises to the plastid. It localises to the chloroplast. Its function is as follows. Binds to 23S rRNA. The protein is Large ribosomal subunit protein uL14c of Emiliania huxleyi (Coccolithophore).